A 360-amino-acid polypeptide reads, in one-letter code: Phospho-N-acetylmuramoyl-pentapeptide-transferase (360 aa).

Residues 1–25 (MLVWLAEHLVKYYSGFNVFSYLTFR) are Periplasmic-facing. A helical transmembrane segment spans residues 26–46 (AIVSLLTALFISLWMGPRMIA). Residues 47 to 71 (HLQKLSFGQVVRNDGPESHFSKRGT) are Cytoplasmic-facing. A helical membrane pass occupies residues 72 to 92 (PTMGGIMILTAIVISVLLWAY). Position 93 (P93) is a topological domain, periplasmic. A helical membrane pass occupies residues 94–114 (SNPYVWCVLVVLVGYGIIGFV). Residues 115–131 (DDYRKVVRKDTKGLIAR) are Cytoplasmic-facing. A helical membrane pass occupies residues 132–152 (WKYFWMSVIALGVAFALYLAG). The Periplasmic portion of the chain corresponds to 153 to 167 (KDTPATQLVVPFFKD). Residues 168 to 188 (VMPQLGLFYILLAYFVIVGTG) traverse the membrane as a helical segment. The Cytoplasmic segment spans residues 189 to 198 (NAVNLTDGLD). The helical transmembrane segment at 199-219 (GLAIMPTVFVAGGFALVAWAT) threads the bilayer. Residues 220–235 (GNMNFASYLHIPYLRH) are Periplasmic-facing. A helical transmembrane segment spans residues 236-256 (AGELVIVCTAIVGAGLGFLWF). The Cytoplasmic segment spans residues 257 to 262 (NTYPAQ). The chain crosses the membrane as a helical span at residues 263 to 283 (VFMGDVGSLALGGALGIIAVL). At 284 to 287 (LRQE) the chain is on the periplasmic side. A helical membrane pass occupies residues 288–308 (FLLVIMGGVFVVETLSVILQV). Over 309 to 337 (GSFKLRGQRIFRMAPIHHHYELKGWPEPR) the chain is Cytoplasmic. A helical transmembrane segment spans residues 338–358 (VIVRFWIISLMLVLIGLATLK). Over 359 to 360 (VR) the chain is Periplasmic.

It belongs to the glycosyltransferase 4 family. MraY subfamily. It depends on Mg(2+) as a cofactor.

It is found in the cell inner membrane. It catalyses the reaction UDP-N-acetyl-alpha-D-muramoyl-L-alanyl-gamma-D-glutamyl-meso-2,6-diaminopimeloyl-D-alanyl-D-alanine + di-trans,octa-cis-undecaprenyl phosphate = di-trans,octa-cis-undecaprenyl diphospho-N-acetyl-alpha-D-muramoyl-L-alanyl-D-glutamyl-meso-2,6-diaminopimeloyl-D-alanyl-D-alanine + UMP. It functions in the pathway cell wall biogenesis; peptidoglycan biosynthesis. In terms of biological role, catalyzes the initial step of the lipid cycle reactions in the biosynthesis of the cell wall peptidoglycan: transfers peptidoglycan precursor phospho-MurNAc-pentapeptide from UDP-MurNAc-pentapeptide onto the lipid carrier undecaprenyl phosphate, yielding undecaprenyl-pyrophosphoryl-MurNAc-pentapeptide, known as lipid I. The chain is Phospho-N-acetylmuramoyl-pentapeptide-transferase from Escherichia coli O7:K1 (strain IAI39 / ExPEC).